Here is a 509-residue protein sequence, read N- to C-terminus: MFLNAEFFFFFFQISISYIRLSQVSMFVRRLHKFSYNPNYKFKCGLEIHTQLKTKYKLFSLSPTSYNEPPNTKLSYFDVGLPGTQPLLNPEALLLALKASVALNCEIQSHSSFDRKHYFYADQPLGYQITQHYYPLAKNGYVQLNKFDDVPDKVITLEQVQLEQDTGKTVNYDDRINVDLNRANTPLIEVVTKPDFENIDQVQAFVRKYQLLVRHLDICTGDLETGAIRVDANISVNDNPRVEIKNLGSSGEIVDALKYEYNRQVTLLQNNETIVQETRGWNGTGTESLRKKENAVDYRYVPDSELPVIRLDSHIQEQLENTLDELPDSVLDRLTKEPYNLQLAHARNLLFQPEVLNYYENIFGRIRDANKWFFHELLAAFAKSDVQFQVDIVSTNMLVDIVSAVEKNEISLTGARIILKHIIRNKSFSTLPHLIKELDIGKPEASAELDDTINEICQQIINTNADVVEKIARGHANALQVLIGQAMKATKGKVHAKEFRSKFMELLNQ.

It belongs to the GatB/GatE family. GatB subfamily. Subunit of the heterotrimeric GatFAB amidotransferase (AdT) complex, composed of A, B and F subunits.

It localises to the mitochondrion. It carries out the reaction L-glutamyl-tRNA(Gln) + L-glutamine + ATP + H2O = L-glutaminyl-tRNA(Gln) + L-glutamate + ADP + phosphate + H(+). In terms of biological role, allows the formation of correctly charged Gln-tRNA(Gln) through the transamidation of misacylated Glu-tRNA(Gln) in the mitochondria. The reaction takes place in the presence of glutamine and ATP through an activated gamma-phospho-Glu-tRNA(Gln). The polypeptide is Glutamyl-tRNA(Gln) amidotransferase subunit B, mitochondrial (Candida dubliniensis (strain CD36 / ATCC MYA-646 / CBS 7987 / NCPF 3949 / NRRL Y-17841) (Yeast)).